We begin with the raw amino-acid sequence, 951 residues long: Protein inturned (951 aa).

3 disordered regions span residues M1–S32, S189–L208, and T687–G765. The PDZ domain maps to H187–T269. A compositionally biased stretch (low complexity) spans P715–T726. Positions M743–S752 are enriched in basic and acidic residues. Gly residues predominate over residues G754–G765.

This sequence belongs to the inturned family. In terms of assembly, interacts with fuz and wdpcp; fuz, intu and wdpcp probably form the core CPLANE (ciliogenesis and planar polarity effectors) complex. As to expression, expressed in the neural plate during neural tube closure with subsequent strong expression in the ventral neural tube and in facial mesenchyme.

Its subcellular location is the cell surface. It localises to the cell membrane. The protein localises to the cytoplasm. The protein resides in the cytoskeleton. It is found in the cilium basal body. Plays a role in the definition of cell polarity via the planar cell polarity (PCP) cascade. Required for ciliogenesis by controlling the organization of the apical actin cytoskeleton and the positioning of the basal bodies at the apical cell surface, which in turn is essential for the normal orientation of elongating ciliary microtubules. Proposed to function as core component of a functional module called CPLANE (ciliogenesis and planar polarity effectors) involved in recruitment of peripheral IFT-A proteins to basal bodies. Controls the localization of both rhoa and disheveled in multi-ciliated cells. Has an indirect effect on hedgehog signaling. The protein is Protein inturned of Xenopus laevis (African clawed frog).